A 201-amino-acid chain; its full sequence is Large ribosomal subunit protein bL25 (201 aa).

It belongs to the bacterial ribosomal protein bL25 family. CTC subfamily. As to quaternary structure, part of the 50S ribosomal subunit; part of the 5S rRNA/L5/L18/L25 subcomplex. Contacts the 5S rRNA. Binds to the 5S rRNA independently of L5 and L18.

This is one of the proteins that binds to the 5S RNA in the ribosome where it forms part of the central protuberance. The polypeptide is Large ribosomal subunit protein bL25 (Aromatoleum aromaticum (strain DSM 19018 / LMG 30748 / EbN1) (Azoarcus sp. (strain EbN1))).